A 279-amino-acid polypeptide reads, in one-letter code: Phosphatidylglycerol--prolipoprotein diacylglyceryl transferase (279 aa).

The next 4 helical transmembrane spans lie at 4–24, 44–64, 76–96, and 104–124; these read IGPLAIRWYGVLLTLAIFLGY, VVFWAVVFGVVGARLGYVLTS, LYIWHGGLSFHGAILGGGLTF, and GYPLWPYLDAATPGVALGIVA. Arg-126 is a binding site for a 1,2-diacyl-sn-glycero-3-phospho-(1'-sn-glycerol). The next 3 membrane-spanning stretches (helical) occupy residues 182–202, 206–226, and 245–265; these read LTQVYGAVVGLILLFLSLYWL, PFYGYAFWQFVLWYSVLRSVL, and LGIGLFTATQVVSLPLVLLSL.

It belongs to the Lgt family.

The protein resides in the cell inner membrane. It catalyses the reaction L-cysteinyl-[prolipoprotein] + a 1,2-diacyl-sn-glycero-3-phospho-(1'-sn-glycerol) = an S-1,2-diacyl-sn-glyceryl-L-cysteinyl-[prolipoprotein] + sn-glycerol 1-phosphate + H(+). It participates in protein modification; lipoprotein biosynthesis (diacylglyceryl transfer). Its function is as follows. Catalyzes the transfer of the diacylglyceryl group from phosphatidylglycerol to the sulfhydryl group of the N-terminal cysteine of a prolipoprotein, the first step in the formation of mature lipoproteins. This is Phosphatidylglycerol--prolipoprotein diacylglyceryl transferase from Thermus thermophilus (strain ATCC 27634 / DSM 579 / HB8).